We begin with the raw amino-acid sequence, 111 residues long: Phosphoribosyl-ATP pyrophosphatase (111 aa).

This sequence belongs to the PRA-PH family.

It localises to the cytoplasm. The enzyme catalyses 1-(5-phospho-beta-D-ribosyl)-ATP + H2O = 1-(5-phospho-beta-D-ribosyl)-5'-AMP + diphosphate + H(+). Its pathway is amino-acid biosynthesis; L-histidine biosynthesis; L-histidine from 5-phospho-alpha-D-ribose 1-diphosphate: step 2/9. The protein is Phosphoribosyl-ATP pyrophosphatase of Pseudomonas paraeruginosa (strain DSM 24068 / PA7) (Pseudomonas aeruginosa (strain PA7)).